Here is an 806-residue protein sequence, read N- to C-terminus: Plasminogen (806 aa).

Positions 1–19 are cleaved as a signal peptide; that stretch reads MEYGKVIFLFLLFLKSGQG. Residues 20-98 enclose the PAN domain; the sequence is ESLENYIKTE…RDVVLFEKRI (79 aa). Cystine bridges form between Cys-49–Cys-73, Cys-53–Cys-61, Cys-103–Cys-181, Cys-124–Cys-164, Cys-152–Cys-176, Cys-185–Cys-262, Cys-188–Cys-316, Cys-206–Cys-245, Cys-234–Cys-257, Cys-275–Cys-352, Cys-296–Cys-335, Cys-324–Cys-347, Cys-371–Cys-448, Cys-392–Cys-431, Cys-420–Cys-443, Cys-476–Cys-555, Cys-497–Cys-538, Cys-526–Cys-550, Cys-563–Cys-681, Cys-573–Cys-581, and Cys-603–Cys-619. Kringle domains are found at residues 102–181, 184–262, 274–352, 370–448, and 475–555; these read DCKS…VPEC, ECMH…IPRC, QCLK…IPSC, ECYE…LEKC, and DCMY…IPQC. A Peptidase S1 domain is found at 577 to 804; that stretch reads IVGGCYAQPH…YISWIEDVMK (228 aa). At Ser-593 the chain carries Phosphoserine. Active-site charge relay system residues include His-618 and Asp-661. Ser-684 bears the Phosphoserine mark. 3 disulfide bridges follow: Cys-695/Cys-762, Cys-725/Cys-741, and Cys-752/Cys-780. Ser-756 (charge relay system) is an active-site residue.

This sequence belongs to the peptidase S1 family. Plasminogen subfamily. Interacts with CSPG4 and AMOT. Interacts (via the Kringle domains) with HRG; the interaction tethers PLG to the cell surface and enhances its activation. Interacts (via Kringle 4 domain) with ADA; the interaction stimulates PLG activation when in complex with DPP4. Angiostatin: Interacts with ATP5F1A; the interaction inhibits most of the angiogenic effects of angiostatin. In terms of processing, in the presence of the inhibitor, the activation involves only cleavage after Arg-576, yielding two chains held together by two disulfide bonds. In the absence of the inhibitor, the activation involves additionally the removal of the activation peptide.

It is found in the secreted. It catalyses the reaction Preferential cleavage: Lys-|-Xaa &gt; Arg-|-Xaa, higher selectivity than trypsin. Converts fibrin into soluble products.. With respect to regulation, converted into plasmin by plasminogen activators, both plasminogen and its activator being bound to fibrin. Activated with catalytic amounts of streptokinase. Functionally, plasmin dissolves the fibrin of blood clots and acts as a proteolytic factor in a variety of other processes including embryonic development, tissue remodeling, tumor invasion, and inflammation. In ovulation, weakens the walls of the Graafian follicle. It activates the urokinase-type plasminogen activator, collagenases and several complement zymogens, such as C1, C4 and C5. Cleavage of fibronectin and laminin leads to cell detachment and apoptosis. Also cleaves fibrin, thrombospondin and von Willebrand factor. Its role in tissue remodeling and tumor invasion may be modulated by CSPG4. Binds to cells. This is Plasminogen (PLG) from Notamacropus eugenii (Tammar wallaby).